The following is a 520-amino-acid chain: Aldehyde dehydrogenase 5, mitochondrial (520 aa).

Residues 1-23 constitute a mitochondrion transit peptide; that stretch reads MLSRTRAAAPNSRIFTRSLLRLY. NAD(+) is bound at residue 266-271; the sequence is GSTATG. The active-site Proton acceptor is Glu-288. Cys-322 (nucleophile) is an active-site residue.

Belongs to the aldehyde dehydrogenase family.

It localises to the mitochondrion matrix. It catalyses the reaction an aldehyde + NADP(+) + H2O = a carboxylate + NADPH + 2 H(+). The enzyme catalyses an aldehyde + NAD(+) + H2O = a carboxylate + NADH + 2 H(+). It participates in alcohol metabolism; ethanol degradation; acetate from ethanol: step 2/2. Its activity is regulated as follows. Induced by potassium ions. In terms of biological role, minor mitochondrial aldehyde dehydrogenase isoform. Plays a role in regulation or biosynthesis of electron transport chain components. Involved in the biosynthesis of acetate during anaerobic growth on glucose. The sequence is that of Aldehyde dehydrogenase 5, mitochondrial (ALD5) from Saccharomyces cerevisiae (strain YJM789) (Baker's yeast).